We begin with the raw amino-acid sequence, 250 residues long: UPF0524 protein C3orf70 homolog (250 aa).

The segment at 201–250 (ESCDEDTEEGAELSSEEDYSPESSWEPDECTLLSPSQSDLEVIETIETTV) is disordered. Acidic residues predominate over residues 202-229 (SCDEDTEEGAELSSEEDYSPESSWEPDE).

This sequence belongs to the UPF0524 family.

Functionally, may play a role in neuronal and neurobehavioral development. In Bos taurus (Bovine), this protein is UPF0524 protein C3orf70 homolog.